The chain runs to 402 residues: Argininosuccinate synthase (402 aa).

9–17 (AYSGGLDTS) serves as a coordination point for ATP. Tyr86 lines the L-citrulline pocket. Gly116 contributes to the ATP binding site. L-aspartate is bound by residues Thr118, Asn122, and Asp123. Position 122 (Asn122) interacts with L-citrulline. L-citrulline-binding residues include Arg126, Ser174, Ser183, Glu259, and Tyr271.

Belongs to the argininosuccinate synthase family. Type 1 subfamily. In terms of assembly, homotetramer.

It localises to the cytoplasm. The enzyme catalyses L-citrulline + L-aspartate + ATP = 2-(N(omega)-L-arginino)succinate + AMP + diphosphate + H(+). The protein operates within amino-acid biosynthesis; L-arginine biosynthesis; L-arginine from L-ornithine and carbamoyl phosphate: step 2/3. This Anoxybacillus flavithermus (strain DSM 21510 / WK1) protein is Argininosuccinate synthase.